The primary structure comprises 168 residues: Mitochondrial inner membrane protein SHH4 (168 aa).

The transit peptide at 1–23 (MSSTKFLKPLCRIRAFHTSIARS) directs the protein to the mitochondrion. The Mitochondrial matrix portion of the chain corresponds to 24 to 65 (FTIPFLPKIPQKPGGVSGTANDSSYMPPESRAQGSYHWIVER). A helical membrane pass occupies residues 66–86 (GLSLAVLPLIAVPLVTTGPIS). Residues 87-92 (TFTDTF) lie on the Mitochondrial intermembrane side of the membrane. Residues 93–113 (LSLVLLGHCHIGFQSCIIDYI) traverse the membrane as a helical segment. Cysteine 101 provides a ligand contact to heme. Position 112 (tyrosine 112) interacts with a ubiquinone. At 114-120 (SERVYGK) the chain is on the mitochondrial matrix side. A helical membrane pass occupies residues 121 to 141 (VHHYAMYLLSLGSFLSFVGIY). At 142-168 (KLESQEAGLIASLKSLWDNKPVEKKRQ) the chain is on the mitochondrial intermembrane side.

It belongs to the CybS family. Interacts with SDH3.

The protein resides in the mitochondrion inner membrane. Its function is as follows. Homolog of SDH4, but seems not to be a stoichiometric subunit of either the succinate dehydrogenase (SDH) complex or the mitochondrial inner membrane translocase TIM22 complex. This is Mitochondrial inner membrane protein SHH4 from Saccharomyces cerevisiae (strain ATCC 204508 / S288c) (Baker's yeast).